The chain runs to 327 residues: GMP reductase (327 aa).

Cysteine 176 acts as the Thioimidate intermediate in catalysis. 205–228 lines the NADP(+) pocket; the sequence is IIADGGIRTHGDIAKSIRFGASMV.

The protein belongs to the IMPDH/GMPR family. GuaC type 2 subfamily.

The enzyme catalyses IMP + NH4(+) + NADP(+) = GMP + NADPH + 2 H(+). In terms of biological role, catalyzes the irreversible NADPH-dependent deamination of GMP to IMP. It functions in the conversion of nucleobase, nucleoside and nucleotide derivatives of G to A nucleotides, and in maintaining the intracellular balance of A and G nucleotides. This Streptococcus suis (strain 98HAH33) protein is GMP reductase.